The chain runs to 261 residues: MTTMPDMQKTSDTRKIPINKVGVKDISYPIVVMDKNKKFQQTVARINMYVDLPHHFKGTHMSRFVEILNAYREDIALDKMEPILQKMKEKLGASSAHLEIEFPYFIEKRAPVSGARSLMEYTCTFCGSLGEEFDFVLGVQIPVTSLCPCSKELSRYGAHNQRSHITVRLRYTDFIWIEDLVAMIEECGSSPVWSLLKRVDEQYVTERAYENPKFVEDIVREVTQKLLAHDAITWFSVEAENFESIHKHSAYAAIERDKKMT.

It belongs to the GTP cyclohydrolase IV family.

The enzyme catalyses GTP + H2O = 7,8-dihydroneopterin 3'-triphosphate + formate + H(+). Its pathway is cofactor biosynthesis; 7,8-dihydroneopterin triphosphate biosynthesis; 7,8-dihydroneopterin triphosphate from GTP: step 1/1. Converts GTP to 7,8-dihydroneopterin triphosphate. The sequence is that of GTP cyclohydrolase FolE2 from Geobacter metallireducens (strain ATCC 53774 / DSM 7210 / GS-15).